A 228-amino-acid polypeptide reads, in one-letter code: Ribonuclease S-4 (228 aa).

The first 27 residues, 1–27, serve as a signal peptide directing secretion; that stretch reads MGITGMTYMFTMVLSLIVLIFSASTVG. Gln36 serves as a coordination point for RNA. Cys42 and Cys49 are joined by a disulfide. His60 lines the RNA pocket. His60 serves as the catalytic Proton donor. Cys75 and Cys119 are joined by a disulfide. Asn87 carries N-linked (GlcNAc) asparagine glycosylation. 98 to 99 is an RNA binding site; sequence NV. The N-linked (GlcNAc...) asparagine glycan is linked to Asn101. Residues Phe108, 111–112, and 115–116 contribute to the RNA site; these read RE and KH. The active site involves Glu112. His116 functions as the Proton acceptor in the catalytic mechanism. 3 N-linked (GlcNAc...) asparagine glycosylation sites follow: Asn144, Asn160, and Asn175. 2 disulfide bridges follow: Cys183-Cys222 and Cys199-Cys210.

The protein belongs to the RNase T2 family. Post-translationally, the N-glycans attached at Asn-101, Asn-160 and Asn-175 consist predominantly of disaccharide (GlcNAc-GlcNAc). The N-glycan at 87 is 53% monosaccharide and 47% disaccharide. The N-glycan at Asn-144 contains mannose and xylose.

The protein localises to the secreted. The protein resides in the extracellular space. It carries out the reaction a ribonucleotidyl-ribonucleotide-RNA + H2O = a 3'-end 3'-phospho-ribonucleotide-RNA + a 5'-end dephospho-ribonucleoside-RNA + H(+). Self-incompatibility (SI) is the inherited ability of a flowering plant to prevent self-fertilization by discriminating between self and non-self pollen during pollination. In many species, self-incompatibility is controlled by the single, multiallelic locus S. The polypeptide is Ribonuclease S-4 (Pyrus pyrifolia (Chinese pear)).